An 85-amino-acid polypeptide reads, in one-letter code: Ice-structuring protein 4 (85 aa).

A signal peptide spans 1–21 (MRITEANPDPDAKAVPAAAAP).

This sequence belongs to the type-I AFP family.

The protein localises to the secreted. Contributes to protect fish blood from freezing at subzero sea water temperatures. Lowers the blood freezing point. Binds to nascent ice crystals and prevents further growth. The protein is Ice-structuring protein 4 of Pseudopleuronectes americanus (Winter flounder).